Reading from the N-terminus, the 39-residue chain is uncharacterized protein (39 aa).

This is an uncharacterized protein from Haemophilus influenzae (strain ATCC 51907 / DSM 11121 / KW20 / Rd).